Reading from the N-terminus, the 217-residue chain is Flagellar L-ring protein 1 (217 aa).

An N-terminal signal peptide occupies residues methionine 1–alanine 16. A lipid anchor (N-palmitoyl cysteine) is attached at cysteine 17. Residue cysteine 17 is the site of S-diacylglycerol cysteine attachment.

Belongs to the FlgH family. In terms of assembly, the basal body constitutes a major portion of the flagellar organelle and consists of four rings (L,P,S, and M) mounted on a central rod.

The protein resides in the cell outer membrane. The protein localises to the bacterial flagellum basal body. In terms of biological role, assembles around the rod to form the L-ring and probably protects the motor/basal body from shearing forces during rotation. This is Flagellar L-ring protein 1 from Chromobacterium violaceum (strain ATCC 12472 / DSM 30191 / JCM 1249 / CCUG 213 / NBRC 12614 / NCIMB 9131 / NCTC 9757 / MK).